A 64-amino-acid chain; its full sequence is Large ribosomal subunit protein bL33 (64 aa).

The tract at residues threonine 19–asparagine 40 is disordered.

Belongs to the bacterial ribosomal protein bL33 family.

The polypeptide is Large ribosomal subunit protein bL33 (Prochlorococcus marinus (strain MIT 9215)).